We begin with the raw amino-acid sequence, 3326 residues long: Protein unc-80 homolog (3326 aa).

Residues 152-164 (IENQGSPGQPCRS) show a composition bias toward polar residues. Disordered regions lie at residues 152–178 (IENQGSPGQPCRSSSHDEEENNRRKTF), 243–267 (KRSSPINSQSQTCESPNQDTRQQGE), 283–317 (PKATISGCHQGNSFDGSLSSQTSQERGPSHSRASL), and 450–469 (RKEDRERKGSIPFHHTGKRR). Ser-257 carries the phosphoserine modification. The span at 283 to 308 (PKATISGCHQGNSFDGSLSSQTSQER) shows a compositional bias: polar residues. At Ser-526 the chain carries Phosphoserine. 5 disordered regions span residues 536 to 560 (LSARHSHSHHTLVSDLPDHSNSHGE), 697 to 785 (RKKS…DNIP), 967 to 1076 (GKKV…SRRI), 1405 to 1430 (EDSKDSLHSSSHTIKSDAGAEEKKVP), and 1469 to 1516 (SSKL…LSNA). Composition is skewed to basic and acidic residues over residues 551-560 (LPDHSNSHGE) and 699-713 (KSENKENESVEKRPS). Residues 723-737 (SSSSTSGFGAPSASG) are compositionally biased toward low complexity. Residues 738 to 770 (AGDGGGEEGGGGDGGGGGGGGDGGGGGGGGGGP) are compositionally biased toward gly residues. The span at 772–783 (EKNEKNQEKDDN) shows a compositional bias: basic and acidic residues. Residues 1038–1055 (SQSAASDTSSQSEQDTSE) show a composition bias toward low complexity. Basic and acidic residues predominate over residues 1418–1429 (IKSDAGAEEKKV). Transmembrane regions (helical) follow at residues 2336–2356 (PFVLQLFASVAPLLEFPDAAN) and 2466–2486 (IAATAALATSLQALLYSVEVL). Positions 2493-2515 (PQMSRSDQGHKGTTTANHTMSSG) are disordered. The next 2 helical transmembrane spans lie at 2853-2873 (GLAESTSQAAYLALKVILVCF) and 2899-2919 (LALWDFLDFIVRTRIPIFVLL). Polar residues predominate over residues 3010–3032 (NTGTGTVWEQDSEPSQQASQDTL). The segment at 3010–3052 (NTGTGTVWEQDSEPSQQASQDTLSRTDEEDEENDSVSMPSVVS) is disordered. Position 3110 is a phosphoserine (Ser-3110). 3 disordered regions span residues 3122–3222 (LQQP…VLTS), 3236–3271 (PKQSEPLLAEEGEKKEDEEIQGATAHCPLSTQLSDP), and 3296–3326 (NGTENPLLSSQFTFTPPELGDTDSALDESHV). A compositionally biased stretch (basic residues) spans 3127–3136 (GRKRGLRQLR). Positions 3157–3168 (LSTTRRSIQPKT) are enriched in polar residues. Residues 3298–3309 (TENPLLSSQFTF) are compositionally biased toward polar residues. Acidic residues predominate over residues 3315–3326 (GDTDSALDESHV).

It belongs to the unc-80 family. In terms of assembly, NALCN complex consists of NALCN and auxiliary subunits, UNC79, UNC80 and NACL1. These auxiliary subunits are essential for the NALCN complex function. Interacts (via N-terminus half) with NALCN; this interaction facilitates NALCN surface localization. Interacts (via C-terminus) with UNC79. UNC80 bridges NALCN to UNC79. In terms of processing, phosphorylated on tyrosine residues. Expressed almost exclusively in the brain. Expressed in hippocampus and ventral tegmental area neurons.

It localises to the cell membrane. The protein resides in the cell projection. The protein localises to the dendrite. Auxiliary subunit of the NALCN sodium channel complex. The NALCN sodium channel complex is a voltage-gated ion channel responsible for the resting Na(+) permeability that controls neuronal excitability. This complex is activated by neuropeptides substance P, neurotensin. In addition, the channel is inhibited by extracellular Ca(2+) through the Ca(2+)-sensing receptor. UNC80 is essential for NALCN sensitivity to extracellular calcium. In Mus musculus (Mouse), this protein is Protein unc-80 homolog (Unc80).